An 876-amino-acid polypeptide reads, in one-letter code: Valine--tRNA ligase (876 aa).

The 'HIGH' region signature appears at 44–54; that stretch reads PNVTGKLHLGH. The 'KMSKS' region motif lies at 520–524; sequence KMSKS. Lysine 523 contacts ATP. A coiled-coil region spans residues 805 to 876; that stretch reads LEGLIDMDKE…VKARIEQLKA (72 aa).

The protein belongs to the class-I aminoacyl-tRNA synthetase family. ValS type 1 subfamily. As to quaternary structure, monomer.

It localises to the cytoplasm. It catalyses the reaction tRNA(Val) + L-valine + ATP = L-valyl-tRNA(Val) + AMP + diphosphate. Catalyzes the attachment of valine to tRNA(Val). As ValRS can inadvertently accommodate and process structurally similar amino acids such as threonine, to avoid such errors, it has a 'posttransfer' editing activity that hydrolyzes mischarged Thr-tRNA(Val) in a tRNA-dependent manner. The chain is Valine--tRNA ligase from Staphylococcus aureus (strain MRSA252).